The chain runs to 672 residues: Penicillin-binding protein activator LpoA (672 aa).

The signal sequence occupies residues 1-26; sequence MLPFHLVRTQAGRVIPVLLAALFLAG. Cysteine 27 carries N-palmitoyl cysteine lipidation. Cysteine 27 carries S-diacylglycerol cysteine lipidation. Residues 298 to 336 are disordered; the sequence is APPTDTAQAGQVTPSSDGQNAQSPAPYSDQAVASTTPAP. The span at 305-322 shows a compositional bias: polar residues; sequence QAGQVTPSSDGQNAQSPA. Over residues 327–336 the composition is skewed to low complexity; sequence QAVASTTPAP.

This sequence belongs to the LpoA family. Interacts with PBP1a.

It is found in the cell outer membrane. In terms of biological role, regulator of peptidoglycan synthesis that is essential for the function of penicillin-binding protein 1A (PBP1a). In Pectobacterium parmentieri (strain WPP163) (Pectobacterium wasabiae (strain WPP163)), this protein is Penicillin-binding protein activator LpoA.